The following is a 207-amino-acid chain: Outer-membrane lipoprotein LolB (207 aa).

Positions 1 to 21 (MPLPDFRLIRLLPLAALVLTA) are cleaved as a signal peptide. Residue cysteine 22 is the site of N-palmitoyl cysteine attachment. Residue cysteine 22 is the site of S-diacylglycerol cysteine attachment.

This sequence belongs to the LolB family. As to quaternary structure, monomer.

It is found in the cell outer membrane. Its function is as follows. Plays a critical role in the incorporation of lipoproteins in the outer membrane after they are released by the LolA protein. The polypeptide is Outer-membrane lipoprotein LolB (Shigella dysenteriae serotype 1 (strain Sd197)).